The chain runs to 1755 residues: Transposon Ty1-DR6 Gag-Pol polyprotein (1755 aa).

Polar residues-rich tracts occupy residues 1–23 (MESQ…SVTS), 48–60 (TKAN…TPAS), and 127–152 (QSQF…GNTF). 3 disordered regions span residues 1 to 93 (MESQ…MMTQ), 126 to 174 (PQSQ…PPPM), and 352 to 421 (GSRN…SKST). The span at 153-165 (TDSSSADSDMTST) shows a compositional bias: low complexity. Residues 299 to 401 (NNGIHINNKV…NSKSKTARAH (103 aa)) are RNA-binding. The span at 402-418 (NVSTSNNSPSTDNDSIS) shows a compositional bias: low complexity. Position 416 is a phosphoserine (Ser416). Asp461 serves as the catalytic For protease activity; shared with dimeric partner. The tract at residues 583-640 (NVHTSESTRKYPYPFIHRMLAHANAQTIRYSLKNNTITYFNESDVDWSSAIDYQCPDC) is integrase-type zinc finger-like. Residues 660–835 (NSYEPFQYLH…AGLDISTLLP (176 aa)) form the Integrase catalytic domain. Positions 671 and 736 each coordinate Mg(2+). 3 disordered regions span residues 956–1087 (SKAV…ETEK), 1092–1111 (RSPS…NIVP), and 1130–1187 (DLPL…DNET). Residues 960 to 969 (SPTDSTPPST) show a composition bias toward low complexity. Over residues 1005–1015 (STPQISNIEST) the composition is skewed to polar residues. The segment covering 1038–1053 (ESSHASKSKDFRHSDS) has biased composition (basic and acidic residues). Composition is skewed to polar residues over residues 1054–1082 (YSEN…QISD) and 1101–1111 (PENNSSHNIVP). The Bipartite nuclear localization signal motif lies at 1178–1212 (KKRSLEDNETEIKVSRDTWNTKNMRSLEPPRSKKR). The region spanning 1338 to 1476 (NNYYITQLDI…DILGLEIKYQ (139 aa)) is the Reverse transcriptase Ty1/copia-type domain. Mg(2+)-binding residues include Asp1346, Asp1427, Asp1428, Asp1610, Glu1652, and Asp1685. The 143-residue stretch at 1610-1752 (DASYGNQPYY…IKTFKLLTNK (143 aa)) folds into the RNase H Ty1/copia-type domain.

In terms of assembly, the capsid protein forms a homotrimer, from which the VLPs are assembled. The protease is a homodimer, whose active site consists of two apposed aspartic acid residues. Initially, virus-like particles (VLPs) are composed of the structural unprocessed proteins Gag and Gag-Pol, and also contain the host initiator methionine tRNA (tRNA(i)-Met) which serves as a primer for minus-strand DNA synthesis, and a dimer of genomic Ty RNA. Processing of the polyproteins occurs within the particle and proceeds by an ordered pathway, called maturation. First, the protease (PR) is released by autocatalytic cleavage of the Gag-Pol polyprotein yielding capsid protein p45 and a Pol-p154 precursor protein. This cleavage is a prerequisite for subsequent processing of Pol-p154 at the remaining sites to release the mature structural and catalytic proteins. Maturation takes place prior to the RT reaction and is required to produce transposition-competent VLPs.

It localises to the cytoplasm. The protein localises to the nucleus. It carries out the reaction DNA(n) + a 2'-deoxyribonucleoside 5'-triphosphate = DNA(n+1) + diphosphate. The enzyme catalyses Endonucleolytic cleavage to 5'-phosphomonoester.. Functionally, capsid protein (CA) is the structural component of the virus-like particle (VLP), forming the shell that encapsulates the retrotransposons dimeric RNA genome. The particles are assembled from trimer-clustered units and there are holes in the capsid shells that allow for the diffusion of macromolecules. CA also has nucleocapsid-like chaperone activity, promoting primer tRNA(i)-Met annealing to the multipartite primer-binding site (PBS), dimerization of Ty1 RNA and initiation of reverse transcription. Its function is as follows. The aspartyl protease (PR) mediates the proteolytic cleavages of the Gag and Gag-Pol polyproteins after assembly of the VLP. Reverse transcriptase/ribonuclease H (RT) is a multifunctional enzyme that catalyzes the conversion of the retro-elements RNA genome into dsDNA within the VLP. The enzyme displays a DNA polymerase activity that can copy either DNA or RNA templates, and a ribonuclease H (RNase H) activity that cleaves the RNA strand of RNA-DNA heteroduplexes during plus-strand synthesis and hydrolyzes RNA primers. The conversion leads to a linear dsDNA copy of the retrotransposon that includes long terminal repeats (LTRs) at both ends. In terms of biological role, integrase (IN) targets the VLP to the nucleus, where a subparticle preintegration complex (PIC) containing at least integrase and the newly synthesized dsDNA copy of the retrotransposon must transit the nuclear membrane. Once in the nucleus, integrase performs the integration of the dsDNA into the host genome. In Saccharomyces cerevisiae (strain ATCC 204508 / S288c) (Baker's yeast), this protein is Transposon Ty1-DR6 Gag-Pol polyprotein (TY1B-DR6).